Consider the following 378-residue polypeptide: UPF0754 membrane protein BCAH187_A1042 (378 aa).

2 helical membrane passes run 1–21 (MNIW…GGFT) and 357–377 (YLGA…LLFL).

The protein belongs to the UPF0754 family.

It is found in the cell membrane. This Bacillus cereus (strain AH187) protein is UPF0754 membrane protein BCAH187_A1042.